The primary structure comprises 510 residues: GMP synthase [glutamine-hydrolyzing] (510 aa).

Residues leucine 5–aspartate 195 enclose the Glutamine amidotransferase type-1 domain. The Nucleophile role is filled by cysteine 82. Residues histidine 169 and glutamate 171 contribute to the active site. One can recognise a GMPS ATP-PPase domain in the interval tryptophan 196–arginine 385. Position 223-229 (serine 223–serine 229) interacts with ATP.

Homodimer.

It carries out the reaction XMP + L-glutamine + ATP + H2O = GMP + L-glutamate + AMP + diphosphate + 2 H(+). It participates in purine metabolism; GMP biosynthesis; GMP from XMP (L-Gln route): step 1/1. Functionally, catalyzes the synthesis of GMP from XMP. This Clostridium botulinum (strain Kyoto / Type A2) protein is GMP synthase [glutamine-hydrolyzing].